Consider the following 119-residue polypeptide: uncharacterized protein (119 aa).

2 helical membrane passes run phenylalanine 57–phenylalanine 77 and tyrosine 80–histidine 100.

The protein localises to the membrane. This is an uncharacterized protein from Saccharomyces cerevisiae (strain ATCC 204508 / S288c) (Baker's yeast).